The sequence spans 77 residues: Translation initiation factor IF-1, chloroplastic (77 aa).

The 71-residue stretch at 1-71 (MKEQKWIHEG…TRGRIIYRLR (71 aa)) folds into the S1-like domain.

It belongs to the IF-1 family. Component of the 30S ribosomal translation pre-initiation complex which assembles on the 30S ribosome in the order IF-2 and IF-3, IF-1 and N-formylmethionyl-tRNA(fMet); mRNA recruitment can occur at any time during PIC assembly.

The protein localises to the plastid. It is found in the chloroplast. Its function is as follows. One of the essential components for the initiation of protein synthesis. Stabilizes the binding of IF-2 and IF-3 on the 30S subunit to which N-formylmethionyl-tRNA(fMet) subsequently binds. Helps modulate mRNA selection, yielding the 30S pre-initiation complex (PIC). Upon addition of the 50S ribosomal subunit IF-1, IF-2 and IF-3 are released leaving the mature 70S translation initiation complex. The sequence is that of Translation initiation factor IF-1, chloroplastic from Lactuca sativa (Garden lettuce).